We begin with the raw amino-acid sequence, 362 residues long: Biotin synthase (362 aa).

One can recognise a Radical SAM core domain in the interval 70–305 (CCGNVVDLCS…QQIIRYAGGR (236 aa)). [4Fe-4S] cluster-binding residues include Cys-88, Cys-92, and Cys-95. 4 residues coordinate [2Fe-2S] cluster: Cys-133, Cys-170, Cys-230, and Arg-300.

This sequence belongs to the radical SAM superfamily. Biotin synthase family. In terms of assembly, homodimer. It depends on [4Fe-4S] cluster as a cofactor. Requires [2Fe-2S] cluster as cofactor.

The enzyme catalyses (4R,5S)-dethiobiotin + (sulfur carrier)-SH + 2 reduced [2Fe-2S]-[ferredoxin] + 2 S-adenosyl-L-methionine = (sulfur carrier)-H + biotin + 2 5'-deoxyadenosine + 2 L-methionine + 2 oxidized [2Fe-2S]-[ferredoxin]. Its pathway is cofactor biosynthesis; biotin biosynthesis; biotin from 7,8-diaminononanoate: step 2/2. In terms of biological role, catalyzes the conversion of dethiobiotin (DTB) to biotin by the insertion of a sulfur atom into dethiobiotin via a radical-based mechanism. This is Biotin synthase from Synechocystis sp. (strain ATCC 27184 / PCC 6803 / Kazusa).